The primary structure comprises 544 residues: MESQRTFLFIGLMLVSFLLFQEWNTDYNTPKADPSATTQTLNPTSSESEDYVPTSSDSALPASATLAKRSVIEITTDVFKVKIDTRGGDIVETYLLQYEETKGSETPYMLLGEFDGKQYFSQSGLIGLNGPDASAQGRPTYHVEQKSYTLTGDELRVPLQFTDSNGVNFTKTYVFKKGQYDVALEYTINNTTSTPLQVQLYTQVKRTVQDKGSMVDQNYLGAAYGTDDDPYEKYSFSDMADKNLNKITLGGYVAFIQHYFVSAWVPMQDQSNTLYSLITKSNAAIIGVKDEAVNIQAGSEQTLTATYYMGPKESDVLEAIHPDLDLTVDYGWLWFISQPLFVLLKWLHSILGNWGVAIIAITIIVKSLMYPLTKAQYTSMAKMRALQPKMAALKEKFGDDRQKFGQATMEMYKKEKVNPMGGCFPILLQMPIFLALFYVFLESTELRHAEFIFWLTDLSAKDPYYVLPILFGASMFITQKLQPMTVTDPMQQKMMTFMPVIFSVFFLWFPSGLVLYWLVSNLISIVQMLIIYRGMEKKGIKVRG.

The segment at 29-58 (TPKADPSATTQTLNPTSSESEDYVPTSSDS) is disordered. Residues 35–46 (SATTQTLNPTSS) show a composition bias toward polar residues. The next 3 membrane-spanning stretches (helical) occupy residues 341 to 361 (FVLL…IIAI), 421 to 441 (GGCF…YVFL), and 499 to 519 (PVIF…YWLV).

It belongs to the OXA1/ALB3/YidC family. Type 1 subfamily. As to quaternary structure, interacts with the Sec translocase complex via SecD. Specifically interacts with transmembrane segments of nascent integral membrane proteins during membrane integration.

The protein resides in the cell inner membrane. Its function is as follows. Required for the insertion and/or proper folding and/or complex formation of integral membrane proteins into the membrane. Involved in integration of membrane proteins that insert both dependently and independently of the Sec translocase complex, as well as at least some lipoproteins. Aids folding of multispanning membrane proteins. The protein is Membrane protein insertase YidC of Pseudoalteromonas translucida (strain TAC 125).